The primary structure comprises 524 residues: Rho guanine nucleotide exchange factor 3 (524 aa).

The disordered stretch occupies residues 75 to 98 (SDSRPDLFSPRPWSRNTPAANTKR). One can recognise a DH domain in the interval 121-303 (IKRQEAIFEL…IQGIVAEINI (183 aa)). Positions 290-448 (AINIIQGIVA…QWLNCIRQAK (159 aa)) constitute a PH domain.

It is found in the cytoplasm. Functionally, acts as a guanine nucleotide exchange factor (GEF) for RhoA and RhoB GTPases. The protein is Rho guanine nucleotide exchange factor 3 (Arhgef3) of Gallus gallus (Chicken).